Reading from the N-terminus, the 199-residue chain is MAP6 domain-containing protein 1 (199 aa).

3 S-palmitoyl cysteine lipidation sites follow: Cys5, Cys10, and Cys11. The interval 33 to 110 is disordered; sequence YSDLDSEEPG…SAQSSAPPAP (78 aa). At Ser38 the chain carries Phosphoserine. Mn stretches follow at residues 130–143 and 165–177; these read TTSYRQEFQAWTGV and DSSPGAGFQVPEV. Residue Ser167 is modified to Phosphoserine.

Belongs to the STOP family. Interacts with calmodulin. Palmitoylated. Palmitoylation enhances association with microtubules.

The protein resides in the golgi apparatus. The protein localises to the cytoplasm. It localises to the cytoskeleton. Its function is as follows. May have microtubule-stabilizing activity. In Homo sapiens (Human), this protein is MAP6 domain-containing protein 1 (MAP6D1).